The primary structure comprises 462 residues: Cysteine--tRNA ligase (462 aa).

Cys-30 provides a ligand contact to Zn(2+). Positions 32-42 (MTVYDYCHIGH) match the 'HIGH' region motif. Positions 214, 239, and 243 each coordinate Zn(2+). Positions 271–275 (KMSKS) match the 'KMSKS' region motif. Position 274 (Lys-274) interacts with ATP.

Belongs to the class-I aminoacyl-tRNA synthetase family. Monomer. The cofactor is Zn(2+).

The protein resides in the cytoplasm. The catalysed reaction is tRNA(Cys) + L-cysteine + ATP = L-cysteinyl-tRNA(Cys) + AMP + diphosphate. This Herminiimonas arsenicoxydans protein is Cysteine--tRNA ligase.